Here is a 222-residue protein sequence, read N- to C-terminus: Extracellular protein ARB_03106 (222 aa).

Positions 1–18 (MRLHSVLAVATAVGCAVA) are cleaved as a signal peptide. N-linked (GlcNAc...) asparagine glycosylation is found at N113 and N126.

The protein localises to the secreted. In Arthroderma benhamiae (strain ATCC MYA-4681 / CBS 112371) (Trichophyton mentagrophytes), this protein is Extracellular protein ARB_03106.